The chain runs to 165 residues: MSAVASIKEFFNTFFLLELLKGMKLTGRHFLSPAITVQFPEEKTPLSPRFRGLHALRRYENGEERCIACKLCEAVCPALAITIESEVRDDGSRRTTRYDIDLTKCIFCGFCEESCPVDSIVETHIFEYHGEKRGDLYFTKDMLLAVGDRYENEIAANKEADAAYR.

4Fe-4S ferredoxin-type domains lie at 57–86 and 96–125; these read RRYENGEERCIACKLCEAVCPALAITIESE and TRYDIDLTKCIFCGFCEESCPVDSIVETHI. Cys66, Cys69, Cys72, Cys76, Cys105, Cys108, Cys111, and Cys115 together coordinate [4Fe-4S] cluster.

The protein belongs to the complex I 23 kDa subunit family. NDH-1 is composed of 14 different subunits. Subunits NuoA, H, J, K, L, M, N constitute the membrane sector of the complex. The cofactor is [4Fe-4S] cluster.

It localises to the cell inner membrane. The catalysed reaction is a quinone + NADH + 5 H(+)(in) = a quinol + NAD(+) + 4 H(+)(out). In terms of biological role, NDH-1 shuttles electrons from NADH, via FMN and iron-sulfur (Fe-S) centers, to quinones in the respiratory chain. The immediate electron acceptor for the enzyme in this species is believed to be ubiquinone. Couples the redox reaction to proton translocation (for every two electrons transferred, four hydrogen ions are translocated across the cytoplasmic membrane), and thus conserves the redox energy in a proton gradient. The sequence is that of NADH-quinone oxidoreductase subunit I from Methylibium petroleiphilum (strain ATCC BAA-1232 / LMG 22953 / PM1).